The primary structure comprises 787 residues: Vacuolar protein sorting-associated protein 35A (787 aa).

Methionine 1 carries the post-translational modification N-acetylmethionine.

This sequence belongs to the VPS35 family. Component of the retromer complex which consists of VPS29 (MAG1), VPS26 (VPS26A or VPS26B), VPS35 (VPS35A or VPS35B or VPS35C), VPS5/17 (SNX1 or SNX2A or SNX2B). Component of a retromer subcomplex consisting of VPS29 (MAG1), VPS26 (VPS26A or VPS26B), VPS35 (VPS35A or VPS35B or VPS35C). Interacts with RABG3F.

The protein resides in the cytoplasm. It is found in the endosome membrane. Its subcellular location is the prevacuolar compartment membrane. The protein localises to the golgi apparatus. It localises to the trans-Golgi network membrane. In terms of biological role, plays a role in vesicular protein sorting. Component of the membrane-associated retromer complex which is essential in endosome-to-Golgi retrograde transport. Also involved in the efficient sorting of seed storage proteins. Binds alone to endosomal membranes and is required for recruitment of VPS26 and VPS29 to membrane. The VPS29-VPS26-VPS35 subcomplex may be involved in recycling of specific cargos from endosome to the plasma membrane. This is Vacuolar protein sorting-associated protein 35A (VPS35A) from Arabidopsis thaliana (Mouse-ear cress).